A 317-amino-acid polypeptide reads, in one-letter code: Protoheme IX farnesyltransferase (317 aa).

9 consecutive transmembrane segments (helical) span residues 43 to 63 (PISV…AGAT), 65 to 85 (PVSG…CAGA), 119 to 139 (ALYW…NLNP), 140 to 160 (IAWI…SLWL), 168 to 188 (IVIG…AVTG), 195 to 215 (VLIA…LAIF), 238 to 258 (LNWL…IYFV), 261 to 281 (WGLV…ALSV), and 292 to 312 (AWVL…SMMV).

It belongs to the UbiA prenyltransferase family. Protoheme IX farnesyltransferase subfamily. As to quaternary structure, interacts with CtaA.

It localises to the cell membrane. It catalyses the reaction heme b + (2E,6E)-farnesyl diphosphate + H2O = Fe(II)-heme o + diphosphate. It functions in the pathway porphyrin-containing compound metabolism; heme O biosynthesis; heme O from protoheme: step 1/1. Functionally, converts heme B (protoheme IX) to heme O by substitution of the vinyl group on carbon 2 of heme B porphyrin ring with a hydroxyethyl farnesyl side group. The sequence is that of Protoheme IX farnesyltransferase from Desulforudis audaxviator (strain MP104C).